We begin with the raw amino-acid sequence, 94 residues long: Small ribosomal subunit protein uS19c (94 aa).

This sequence belongs to the universal ribosomal protein uS19 family.

Its subcellular location is the plastid. In terms of biological role, protein S19 forms a complex with S13 that binds strongly to the 16S ribosomal RNA. The chain is Small ribosomal subunit protein uS19c (rps19) from Epifagus virginiana (Beechdrops).